An 887-amino-acid polypeptide reads, in one-letter code: Valine--tRNA ligase (887 aa).

A 'HIGH' region motif is present at residues 45-55 (PNVTGILHMGH). Residues 528-532 (KMSKS) carry the 'KMSKS' region motif. Residue Lys531 coordinates ATP. Positions 817–887 (TGLLNNEAEI…LKESLKSFEE (71 aa)) form a coiled coil.

It belongs to the class-I aminoacyl-tRNA synthetase family. ValS type 1 subfamily. In terms of assembly, monomer.

It is found in the cytoplasm. It catalyses the reaction tRNA(Val) + L-valine + ATP = L-valyl-tRNA(Val) + AMP + diphosphate. Catalyzes the attachment of valine to tRNA(Val). As ValRS can inadvertently accommodate and process structurally similar amino acids such as threonine, to avoid such errors, it has a 'posttransfer' editing activity that hydrolyzes mischarged Thr-tRNA(Val) in a tRNA-dependent manner. This Fusobacterium nucleatum subsp. nucleatum (strain ATCC 25586 / DSM 15643 / BCRC 10681 / CIP 101130 / JCM 8532 / KCTC 2640 / LMG 13131 / VPI 4355) protein is Valine--tRNA ligase.